Here is a 456-residue protein sequence, read N- to C-terminus: tRNA-2-methylthio-N(6)-dimethylallyladenosine synthase (456 aa).

The MTTase N-terminal domain occupies 18–134; the sequence is KKLFIETYGC…LPDLVASVEA (117 aa). Residues Cys-27, Cys-63, Cys-98, Cys-172, Cys-176, and Cys-179 each contribute to the [4Fe-4S] cluster site. The Radical SAM core domain occupies 158–390; it reads CGNHISGFVS…IELQNRLSAE (233 aa). One can recognise a TRAM domain in the interval 393–456; the sequence is ARDVGKTFEV…SATLKGEEVF (64 aa).

Belongs to the methylthiotransferase family. MiaB subfamily. As to quaternary structure, monomer. Requires [4Fe-4S] cluster as cofactor.

Its subcellular location is the cytoplasm. It catalyses the reaction N(6)-dimethylallyladenosine(37) in tRNA + (sulfur carrier)-SH + AH2 + 2 S-adenosyl-L-methionine = 2-methylsulfanyl-N(6)-dimethylallyladenosine(37) in tRNA + (sulfur carrier)-H + 5'-deoxyadenosine + L-methionine + A + S-adenosyl-L-homocysteine + 2 H(+). Its function is as follows. Catalyzes the methylthiolation of N6-(dimethylallyl)adenosine (i(6)A), leading to the formation of 2-methylthio-N6-(dimethylallyl)adenosine (ms(2)i(6)A) at position 37 in tRNAs that read codons beginning with uridine. This is tRNA-2-methylthio-N(6)-dimethylallyladenosine synthase from Phocaeicola vulgatus (strain ATCC 8482 / DSM 1447 / JCM 5826 / CCUG 4940 / NBRC 14291 / NCTC 11154) (Bacteroides vulgatus).